A 294-amino-acid polypeptide reads, in one-letter code: Glutamyl-Q tRNA(Asp) synthetase (294 aa).

L-glutamate contacts are provided by residues 7–11 (RFAPS) and Glu-43. A 'HIGH' region motif is present at residues 10-20 (PSPSGPLHFGS). Residues Cys-99, Cys-101, Tyr-113, and Cys-117 each coordinate Zn(2+). Residues Tyr-168 and Arg-186 each contribute to the L-glutamate site. The short motif at 224 to 228 (KLSKQ) is the 'KMSKS' region element. Lys-227 contacts ATP.

This sequence belongs to the class-I aminoacyl-tRNA synthetase family. GluQ subfamily. Zn(2+) is required as a cofactor.

Its function is as follows. Catalyzes the tRNA-independent activation of glutamate in presence of ATP and the subsequent transfer of glutamate onto a tRNA(Asp). Glutamate is transferred on the 2-amino-5-(4,5-dihydroxy-2-cyclopenten-1-yl) moiety of the queuosine in the wobble position of the QUC anticodon. The chain is Glutamyl-Q tRNA(Asp) synthetase from Vibrio parahaemolyticus serotype O3:K6 (strain RIMD 2210633).